Consider the following 533-residue polypeptide: Malate synthase A (533 aa).

R166 serves as the catalytic Proton acceptor. Catalysis depends on D447, which acts as the Proton donor.

This sequence belongs to the malate synthase family.

It localises to the cytoplasm. It carries out the reaction glyoxylate + acetyl-CoA + H2O = (S)-malate + CoA + H(+). Its pathway is carbohydrate metabolism; glyoxylate cycle; (S)-malate from isocitrate: step 2/2. The polypeptide is Malate synthase A (aceB) (Escherichia coli (strain K12)).